Here is a 235-residue protein sequence, read N- to C-terminus: Transcription factor MYB59 (235 aa).

HTH myb-type domains follow at residues 5–57 and 58–112; these read QEEY…VNYL and HPGL…RKKA. Residues 33–57 constitute a DNA-binding region (H-T-H motif); that stretch reads WDFVAKVSGLNRTGKSCRLRWVNYL. The short motif at 62 to 65 is the Bipartite nuclear localization signal 1 element; sequence KRGK. The segment at residues 85–108 is a DNA-binding region (H-T-H motif); the sequence is WSKIARKLPGRTDNEIKNYWRTHM. The short motif at 109 to 117 is the Bipartite nuclear localization signal 2 element; it reads RKKAQEKKR. A disordered region spans residues 109-147; it reads RKKAQEKKRPMSPTSSSSNCCSSSMTTTTSQDTGGSNGK. Residues 119-138 show a composition bias toward low complexity; that stretch reads MSPTSSSSNCCSSSMTTTTS.

In terms of tissue distribution, mainly expressed in leaves and seedlings, and to a lower extent, in roots, stems and inflorescences. Isoform MYB59-1 and isoform MYB59-2 are present in roots, leaves, and seedlings, while the expression of isoform MYB59-3 and isoform MYB59-4 is confined to seedlings.

Its subcellular location is the nucleus. Transcription factor. The sequence is that of Transcription factor MYB59 (MYB59) from Arabidopsis thaliana (Mouse-ear cress).